The sequence spans 91 residues: Small ribosomal subunit protein bS18 (91 aa).

This sequence belongs to the bacterial ribosomal protein bS18 family. Part of the 30S ribosomal subunit. Forms a tight heterodimer with protein bS6.

Binds as a heterodimer with protein bS6 to the central domain of the 16S rRNA, where it helps stabilize the platform of the 30S subunit. The sequence is that of Small ribosomal subunit protein bS18 from Burkholderia multivorans (strain ATCC 17616 / 249).